Consider the following 330-residue polypeptide: Ketol-acid reductoisomerase (NADP(+)) (330 aa).

The 181-residue stretch at Met-1–Thr-181 folds into the KARI N-terminal Rossmann domain. NADP(+) is bound by residues Tyr-24–Gln-27, Arg-47, Ser-50, Ser-52, and Asp-82–Gln-85. Residue His-107 is part of the active site. Gly-133 contacts NADP(+). The 146-residue stretch at Asn-182 to Leu-327 folds into the KARI C-terminal knotted domain. Residues Asp-190, Glu-194, Glu-226, and Glu-230 each contribute to the Mg(2+) site. Residue Ser-251 coordinates substrate.

This sequence belongs to the ketol-acid reductoisomerase family. The cofactor is Mg(2+).

It catalyses the reaction (2R)-2,3-dihydroxy-3-methylbutanoate + NADP(+) = (2S)-2-acetolactate + NADPH + H(+). It carries out the reaction (2R,3R)-2,3-dihydroxy-3-methylpentanoate + NADP(+) = (S)-2-ethyl-2-hydroxy-3-oxobutanoate + NADPH + H(+). It functions in the pathway amino-acid biosynthesis; L-isoleucine biosynthesis; L-isoleucine from 2-oxobutanoate: step 2/4. Its pathway is amino-acid biosynthesis; L-valine biosynthesis; L-valine from pyruvate: step 2/4. In terms of biological role, involved in the biosynthesis of branched-chain amino acids (BCAA). Catalyzes an alkyl-migration followed by a ketol-acid reduction of (S)-2-acetolactate (S2AL) to yield (R)-2,3-dihydroxy-isovalerate. In the isomerase reaction, S2AL is rearranged via a Mg-dependent methyl migration to produce 3-hydroxy-3-methyl-2-ketobutyrate (HMKB). In the reductase reaction, this 2-ketoacid undergoes a metal-dependent reduction by NADPH to yield (R)-2,3-dihydroxy-isovalerate. The chain is Ketol-acid reductoisomerase (NADP(+)) from Chlorobium chlorochromatii (strain CaD3).